A 33-amino-acid chain; its full sequence is Photosystem II reaction center protein Psb30 (33 aa).

The chain crosses the membrane as a helical span at residues 5 to 25 (VIAQLTVLTLMVVSGPLVIVL).

This sequence belongs to the Psb30/Ycf12 family. As to quaternary structure, PSII is composed of 1 copy each of membrane proteins PsbA, PsbB, PsbC, PsbD, PsbE, PsbF, PsbH, PsbI, PsbJ, PsbK, PsbL, PsbM, PsbT, PsbX, PsbY, PsbZ, Psb30/Ycf12, peripheral proteins of the oxygen-evolving complex and a large number of cofactors. It forms dimeric complexes.

The protein resides in the plastid. It localises to the chloroplast thylakoid membrane. Its function is as follows. A core subunit of photosystem II (PSII), probably helps stabilize the reaction center. The polypeptide is Photosystem II reaction center protein Psb30 (Pinus koraiensis (Korean pine)).